Here is a 245-residue protein sequence, read N- to C-terminus: Serine/arginine-rich splicing factor 1B (245 aa).

One can recognise an RRM 1 domain in the interval 15 to 90 (CRIYVGNLPP…YRLRVEFPRS (76 aa)). Disordered stretches follow at residues 89 to 116 (RSGR…PPSR) and 192 to 245 (KVDG…RSRT). Residues 91 to 106 (GRGGGRGGGGGGGVGA) show a composition bias toward gly residues. Positions 120-194 (YRVIVSGLPP…ETAYIRVKVD (75 aa)) constitute an RRM 2 domain. Residues 204–245 (SRSRSRSRSRSRSNSRSRSYSPRRSRGSPRYSPRHSRSRSRT) show a composition bias toward basic residues.

It belongs to the splicing factor SR family.

The protein localises to the cytoplasm. Its subcellular location is the nucleus speckle. Functionally, may play a role in preventing exon skipping, ensuring the accuracy of splicing and regulating alternative splicing. The sequence is that of Serine/arginine-rich splicing factor 1B (srsf1b) from Danio rerio (Zebrafish).